Here is a 293-residue protein sequence, read N- to C-terminus: 4-hydroxy-tetrahydrodipicolinate synthase (293 aa).

Position 44 (Thr-44) interacts with pyruvate. Catalysis depends on Tyr-132, which acts as the Proton donor/acceptor. Residue Lys-161 is the Schiff-base intermediate with substrate of the active site. Ile-205 lines the pyruvate pocket.

Belongs to the DapA family. As to quaternary structure, homotetramer; dimer of dimers.

Its subcellular location is the cytoplasm. The enzyme catalyses L-aspartate 4-semialdehyde + pyruvate = (2S,4S)-4-hydroxy-2,3,4,5-tetrahydrodipicolinate + H2O + H(+). The protein operates within amino-acid biosynthesis; L-lysine biosynthesis via DAP pathway; (S)-tetrahydrodipicolinate from L-aspartate: step 3/4. Its function is as follows. Catalyzes the condensation of (S)-aspartate-beta-semialdehyde [(S)-ASA] and pyruvate to 4-hydroxy-tetrahydrodipicolinate (HTPA). The sequence is that of 4-hydroxy-tetrahydrodipicolinate synthase from Thermosipho africanus (strain TCF52B).